Reading from the N-terminus, the 287-residue chain is Ribonuclease Z (287 aa).

Positions 64, 66, 68, 69, 124, 191, and 250 each coordinate Zn(2+). The active-site Proton acceptor is Asp-68.

It belongs to the RNase Z family. As to quaternary structure, homodimer. Zn(2+) serves as cofactor.

The enzyme catalyses Endonucleolytic cleavage of RNA, removing extra 3' nucleotides from tRNA precursor, generating 3' termini of tRNAs. A 3'-hydroxy group is left at the tRNA terminus and a 5'-phosphoryl group is left at the trailer molecule.. Its function is as follows. Zinc phosphodiesterase, which displays some tRNA 3'-processing endonuclease activity. Probably involved in tRNA maturation, by removing a 3'-trailer from precursor tRNA. This chain is Ribonuclease Z, found in Pyrobaculum arsenaticum (strain DSM 13514 / JCM 11321 / PZ6).